The chain runs to 182 residues: MTFEQLIPLIIMAFALGMDAFSVSLGMGMMPLKLRQILYIGMTIGIFHIIMPFIGMVLGRFLSEKYGDIAHFAGAILLIGLGFYIVYSTILQNGETRTVPIGISLFVFAFGVSIDSFSVGLSLGIYGAQTIITILLFGFVSMLLAWIGLLIGRHAKDMLGTYGEIVGGIILVGFGLYILFPI.

The next 6 helical transmembrane spans lie at 6–26 (LIPL…VSLG), 37–57 (ILYI…IGMV), 71–91 (HFAG…STIL), 101–121 (IGIS…SVGL), 131–151 (IITI…GLLI), and 162–182 (YGEI…LFPI).

The protein belongs to the MntP (TC 9.B.29) family.

Its subcellular location is the cell membrane. Functionally, probably functions as a manganese efflux pump. The chain is Putative manganese efflux pump MntP from Bacillus cereus (strain G9842).